The primary structure comprises 467 residues: Translation initiation factor eIF2B subunit delta (467 aa).

Positions 1–106 are disordered; that stretch reads MGFSAEQAKK…QNPQNSPETD (106 aa). Residues Ser16, Ser19, Ser21, and Ser23 each carry the phosphoserine modification. Positions 16 to 37 are enriched in polar residues; the sequence is SPVSESSSVGGTSPATASSVVS. The residue at position 27 (Thr27) is a Phosphothreonine. Phosphoserine is present on residues Ser28 and Ser37. Over residues 51-61 the composition is skewed to basic residues; sequence LKKARKQASRR. Low complexity predominate over residues 84-102; sequence PNKNSNQQKKASKQNPQNS.

It belongs to the eIF-2B alpha/beta/delta subunits family. As to quaternary structure, component of the translation initiation factor 2B (eIF2B) complex which is a heterodecamer of two sets of five different subunits: alpha, beta, gamma, delta and epsilon. Subunits alpha, beta and delta comprise a regulatory subcomplex and subunits epsilon and gamma comprise a catalytic subcomplex. Within the complex, the hexameric regulatory complex resides at the center, with the two heterodimeric catalytic subcomplexes bound on opposite sides.

It is found in the cytoplasm. The protein resides in the cytosol. Its function is as follows. Acts as a component of the translation initiation factor 2B (eIF2B) complex, which catalyzes the exchange of GDP for GTP on the eukaryotic initiation factor 2 (eIF2) complex gamma subunit. Its guanine nucleotide exchange factor activity is repressed when bound to eIF2 complex phosphorylated on the alpha subunit, thereby limiting the amount of methionyl-initiator methionine tRNA available to the ribosome and consequently global translation is repressed. This is Translation initiation factor eIF2B subunit delta (tif224) from Schizosaccharomyces pombe (strain 972 / ATCC 24843) (Fission yeast).